The chain runs to 264 residues: MSHRADEIRKRLEKRRKQLSGSKRFSTQTVSEKQKPPSWVMVTDQEKHGTLPVYEDNMPTFNGKHPLVKTDSIILKCLLSACLVLVSAIAYKTNIGPVSQIKPAVAKTFETEFQFASASHWFETKFGNPLAFLAPEHKNKEQQIEVGKDLIAPASGKVQQDFQDNGEGIKVETSSDKIDSVKEGYVVEVSKDSQTGLTVKVQHADNTYSIYGELKDVDVALYDFVDKGKKLGSIKLDDHNKGVYYFAMKDGDKFIDPIQVISFE.

Residues methionine 1–lysine 10 are compositionally biased toward basic and acidic residues. The tract at residues methionine 1–proline 37 is disordered. The Mother cell cytoplasmic segment spans residues methionine 1–serine 72. A compositionally biased stretch (polar residues) spans leucine 19–serine 31. The chain crosses the membrane as a helical span at residues isoleucine 73–alanine 90. The Forespore intermembrane space segment spans residues tyrosine 91–glutamate 264.

In terms of assembly, forms a complex with BofA and SpoIVFB localized in the mother-cell membrane surrounding the forespore. Post-translationally, may be degraded by FtsH. It is stabilized by an ftsH disruption mutant, and in a probably independent fashion, by overexpression of BofA.

The protein localises to the forespore outer membrane. Functionally, implicated in the coupling of mother cell to forespore gene expression. Required for spore formation at 37 degrees Celsius, but not at 30 degrees Celsius. SpoIVFA plays a central role in both maintaining the SpoIVFA/BofA/SpoIVFB complex and anchoring it to the outer forespore membrane. SpoIVFA brings BofA into close proximity to SpoIVFB, allowing BofA to inhibit SpoIVFB. Increased accumulation of SpoIVFA seems to inhibit the activity of SpoIVFB and thus regulates the activation of sigma-K. The protein is Stage IV sporulation protein FA (spoIVFA) of Bacillus subtilis (strain 168).